A 686-amino-acid polypeptide reads, in one-letter code: Tripartite terminase subunit 3 (686 aa).

The Walker A motif signature appears at 219–226 (IPRRHGKT). The Walker B motif signature appears at 314–319 (LLYVDE). The For ATPase activity role is filled by Glu319. Catalysis depends on for nuclease activity residues Asp475, Glu548, and Asp660.

It belongs to the herpesviridae TRM3 protein family. As to quaternary structure, interacts with the terminase subunits TRM1 and TRM2. Interacts with portal protein.

The protein localises to the host nucleus. Functionally, component of the molecular motor that translocates viral genomic DNA in empty capsid during DNA packaging. Forms a tripartite terminase complex together with TRM1 and TRM2 in the host cytoplasm. Once the complex reaches the host nucleus, it interacts with the capsid portal vertex. This portal forms a ring in which genomic DNA is translocated into the capsid. TRM3 carries an RNase H-like nuclease activity that plays an important role for the cleavage of concatemeric viral DNA into unit length genomes. This Equine herpesvirus 2 (strain 86/87) (EHV-2) protein is Tripartite terminase subunit 3.